We begin with the raw amino-acid sequence, 102 residues long: Small ribosomal subunit protein uS10 (102 aa).

This sequence belongs to the universal ribosomal protein uS10 family. As to quaternary structure, part of the 30S ribosomal subunit.

Its function is as follows. Involved in the binding of tRNA to the ribosomes. This is Small ribosomal subunit protein uS10 from Kineococcus radiotolerans (strain ATCC BAA-149 / DSM 14245 / SRS30216).